The chain runs to 387 residues: Putative odorant receptor 19b (387 aa).

At methionine 1 to tyrosine 40 the chain is on the cytoplasmic side. A helical transmembrane segment spans residues serine 41–leucine 61. Over glutamine 62–glutamate 71 the chain is Extracellular. Residues serine 72–methionine 92 form a helical membrane-spanning segment. At arginine 93–glutamate 127 the chain is on the cytoplasmic side. Residues phenylalanine 128–isoleucine 148 form a helical membrane-spanning segment. Residues serine 149 to serine 171 lie on the Extracellular side of the membrane. Residues alanine 172–leucine 192 traverse the membrane as a helical segment. Residues asparagine 193–serine 254 are Cytoplasmic-facing. A helical transmembrane segment spans residues leucine 255 to tyrosine 275. Over phenylalanine 276–methionine 285 the chain is Extracellular. The helical transmembrane segment at arginine 286–tyrosine 306 threads the bilayer. The Cytoplasmic portion of the chain corresponds to threonine 307 to arginine 336. A helical membrane pass occupies residues leucine 337–valine 357. Over proline 358–glutamate 387 the chain is Extracellular.

This sequence belongs to the insect chemoreceptor superfamily. Heteromeric odorant receptor channel (TC 1.A.69) family. Or2a subfamily. In terms of assembly, interacts with Orco. Complexes exist early in the endomembrane system in olfactory sensory neurons (OSNs), coupling these complexes to the conserved ciliary trafficking pathway.

It localises to the cell membrane. Functionally, odorant receptor which mediates acceptance or avoidance behavior, depending on its substrates. The odorant receptor repertoire encodes a large collection of odor stimuli that vary widely in identity, intensity, and duration. May form a complex with Orco to form odorant-sensing units, providing sensitive and prolonged odorant signaling and calcium permeability. This Drosophila melanogaster (Fruit fly) protein is Putative odorant receptor 19b.